Consider the following 332-residue polypeptide: MTKITVFGMGSFGTALANVLAENGHDVLMWGKNQDAVDELNTCHTNKKYLKYAKLDVNIIATSDMTKAIQFADIYLMALPTKAMREVATQINDKLTSKKTFIHVAKGIENGTFKRVSEMIEDSISPEYNAGIGVLSGPSHAEEVVVKQPTTVAASSKDKSVSKLTQDLFMNDYLRVYTNDDLIGVELGGALKNIIAVASGIVAGIGYGDNAKAALMTRGLAEISRLGEKLGADPMTFLGLGGIGDLIVTCISTHSRNFTLGYKLGQGESMDQALSEMNMVVEGIYTTKSVYHLAKEKNVDMPITNALYRVLFENISVKECVKDLMERDKKSE.

The NADPH site is built by Ser11, Phe12, Lys32, and Lys106. 3 residues coordinate sn-glycerol 3-phosphate: Lys106, Gly137, and Ser139. Residue Ala141 coordinates NADPH. Sn-glycerol 3-phosphate is bound by residues Lys192, Asp245, Ser255, Arg256, and Asn257. The active-site Proton acceptor is Lys192. Arg256 provides a ligand contact to NADPH. 2 residues coordinate NADPH: Val280 and Glu282.

The protein belongs to the NAD-dependent glycerol-3-phosphate dehydrogenase family.

It is found in the cytoplasm. The catalysed reaction is sn-glycerol 3-phosphate + NAD(+) = dihydroxyacetone phosphate + NADH + H(+). It catalyses the reaction sn-glycerol 3-phosphate + NADP(+) = dihydroxyacetone phosphate + NADPH + H(+). Its pathway is membrane lipid metabolism; glycerophospholipid metabolism. In terms of biological role, catalyzes the reduction of the glycolytic intermediate dihydroxyacetone phosphate (DHAP) to sn-glycerol 3-phosphate (G3P), the key precursor for phospholipid synthesis. In Staphylococcus aureus (strain Mu3 / ATCC 700698), this protein is Glycerol-3-phosphate dehydrogenase [NAD(P)+].